Here is a 202-residue protein sequence, read N- to C-terminus: Ribonuclease HII (202 aa).

Residues 18–202 enclose the RNase H type-2 domain; sequence TYICGVDEAG…FAPVAKLLKQ (185 aa). 3 residues coordinate a divalent metal cation: Asp-24, Glu-25, and Asp-116.

It belongs to the RNase HII family. Mn(2+) serves as cofactor. Mg(2+) is required as a cofactor.

The protein localises to the cytoplasm. The catalysed reaction is Endonucleolytic cleavage to 5'-phosphomonoester.. Endonuclease that specifically degrades the RNA of RNA-DNA hybrids. This chain is Ribonuclease HII, found in Acholeplasma laidlawii (strain PG-8A).